The following is a 145-amino-acid chain: Large ribosomal subunit protein mL59 (145 aa).

Basic and acidic residues predominate over residues 123-135 (LKKTSKFKNERQK). Positions 123–145 (LKKTSKFKNERQKASKIAKPSPF) are disordered.

It belongs to the mitochondrion-specific ribosomal protein mL59 family. Component of the mitochondrial large ribosomal subunit (mt-LSU). Mature yeast 74S mitochondrial ribosomes consist of a small (37S) and a large (54S) subunit. The 37S small subunit contains a 15S ribosomal RNA (15S mt-rRNA) and at least 32 different proteins. The 54S large subunit contains a 21S rRNA (21S mt-rRNA) and at least 45 different proteins.

Its subcellular location is the mitochondrion. Its function is as follows. Component of the mitochondrial ribosome (mitoribosome), a dedicated translation machinery responsible for the synthesis of mitochondrial genome-encoded proteins, including at least some of the essential transmembrane subunits of the mitochondrial respiratory chain. The mitoribosomes are attached to the mitochondrial inner membrane and translation products are cotranslationally integrated into the membrane. The protein is Large ribosomal subunit protein mL59 (mrpl25) of Schizosaccharomyces pombe (strain 972 / ATCC 24843) (Fission yeast).